We begin with the raw amino-acid sequence, 329 residues long: Tryptophan--tRNA ligase (329 aa).

ATP contacts are provided by residues 9 to 11 (QPS) and 17 to 18 (GN). The 'HIGH' region motif lies at 10–18 (PSGIPTIGN). Aspartate 133 lines the L-tryptophan pocket. Residues 145–147 (GDD), valine 184, and 193–197 (KMSKS) each bind ATP. A 'KMSKS' region motif is present at residues 193–197 (KMSKS).

It belongs to the class-I aminoacyl-tRNA synthetase family. In terms of assembly, homodimer.

It localises to the cytoplasm. It catalyses the reaction tRNA(Trp) + L-tryptophan + ATP = L-tryptophyl-tRNA(Trp) + AMP + diphosphate + H(+). Catalyzes the attachment of tryptophan to tRNA(Trp). This chain is Tryptophan--tRNA ligase, found in Staphylococcus epidermidis (strain ATCC 35984 / DSM 28319 / BCRC 17069 / CCUG 31568 / BM 3577 / RP62A).